Consider the following 176-residue polypeptide: NAD(P)H-quinone oxidoreductase subunit 6, chloroplastic (176 aa).

The next 5 membrane-spanning stretches (helical) occupy residues 10–30, 32–52, 61–81, 92–112, and 152–172; these read FLLV…VLLP, PIFS…LYIL, AQLL…VMFM, LWTV…FSLM, and FFLP…GAIS.

The protein belongs to the complex I subunit 6 family. NDH is composed of at least 16 different subunits, 5 of which are encoded in the nucleus.

The protein resides in the plastid. The protein localises to the chloroplast thylakoid membrane. It catalyses the reaction a plastoquinone + NADH + (n+1) H(+)(in) = a plastoquinol + NAD(+) + n H(+)(out). The enzyme catalyses a plastoquinone + NADPH + (n+1) H(+)(in) = a plastoquinol + NADP(+) + n H(+)(out). NDH shuttles electrons from NAD(P)H:plastoquinone, via FMN and iron-sulfur (Fe-S) centers, to quinones in the photosynthetic chain and possibly in a chloroplast respiratory chain. The immediate electron acceptor for the enzyme in this species is believed to be plastoquinone. Couples the redox reaction to proton translocation, and thus conserves the redox energy in a proton gradient. The chain is NAD(P)H-quinone oxidoreductase subunit 6, chloroplastic (ndhG) from Nasturtium officinale (Watercress).